A 208-amino-acid polypeptide reads, in one-letter code: Thymidylate kinase (208 aa).

10 to 17 (GLEGAGKS) contacts ATP.

Belongs to the thymidylate kinase family.

It catalyses the reaction dTMP + ATP = dTDP + ADP. Its function is as follows. Phosphorylation of dTMP to form dTDP in both de novo and salvage pathways of dTTP synthesis. The polypeptide is Thymidylate kinase (Glaesserella parasuis serovar 5 (strain SH0165) (Haemophilus parasuis)).